The chain runs to 951 residues: Protocadherin-20 (951 aa).

A signal peptide spans 1–60 (MRGRGNARSSQALGVSWCPATWHPRLDMGRLHRPRSSTSYRNLPHLFLFFLFVGPFSCLG). Over 61 to 890 (SYSRATELLY…VESVSCMPTL (830 aa)) the chain is Extracellular. 6 Cadherin domains span residues 64–209 (RATE…APQF), 210–320 (PVSQ…CPLF), 321–535 (TDSQ…APIF), 536–639 (LQPL…SPRF), 640–742 (INKD…PPLV), and 746–863 (QSNM…EPEI). Asparagine 135 is a glycosylation site (N-linked (GlcNAc...) asparagine). Asparagine 326 and asparagine 332 each carry an N-linked (GlcNAc...) asparagine glycan. N-linked (GlcNAc...) asparagine glycosylation is found at asparagine 680, asparagine 748, asparagine 803, asparagine 844, and asparagine 849. The chain crosses the membrane as a helical span at residues 891–911 (VALSVISLGSITLVTGMGIYI). Residues 912 to 951 (CLRKGEKHPREDENLEVQIPLKGKIDLHMRERKPMDISNI) are Cytoplasmic-facing.

Its subcellular location is the cell membrane. Potential calcium-dependent cell-adhesion protein. In Homo sapiens (Human), this protein is Protocadherin-20 (PCDH20).